We begin with the raw amino-acid sequence, 327 residues long: 3' cyclic ADP-D-ribose synthase AaTIR (327 aa).

A TIR domain region spans residues 10-120 (VALSFAGENR…GILKTIGYIN (111 aa)). Residue Lys-229 is part of the active site.

Homodimer.

The enzyme catalyses NADP(+) + H2O = ADP-D-ribose 2'-phosphate + nicotinamide + H(+). It carries out the reaction NAD(+) = 3'cADPR + nicotinamide + H(+). Functionally, NAD(+) hydrolase (NADase) that generates 3'cADPR, a cyclization variant of cyclic ADP-D-ribose (also called v2-cADPR). Also cleaves NADP(+), but does not cyclize the product. The sequence is that of 3' cyclic ADP-D-ribose synthase AaTIR from Aquimarina amphilecti.